A 61-amino-acid polypeptide reads, in one-letter code: Lens epithelial cell protein LEP503 (61 aa).

In terms of tissue distribution, preferentially expressed in the lens epithelial cells.

The sequence is that of Lens epithelial cell protein LEP503 (Lenep) from Rattus norvegicus (Rat).